Consider the following 113-residue polypeptide: Nucleoid-associated protein P9303_00241 (113 aa).

Residues 90–113 form a disordered region; it reads TTTMKEQMEELTGGLNLNLPGMSD.

The protein belongs to the YbaB/EbfC family. In terms of assembly, homodimer.

The protein resides in the cytoplasm. The protein localises to the nucleoid. Binds to DNA and alters its conformation. May be involved in regulation of gene expression, nucleoid organization and DNA protection. This Prochlorococcus marinus (strain MIT 9303) protein is Nucleoid-associated protein P9303_00241.